The chain runs to 182 residues: CDP-diacylglycerol--glycerol-3-phosphate 3-phosphatidyltransferase (182 aa).

Residues 1 to 12 (MRLNIPTCLTLF) are Cytoplasmic-facing. The helical transmembrane segment at 13-37 (RLIIVPFFIIVFYLPFSNASFYSAI) threads the bilayer. Topologically, residues 38–60 (IFILAALTDWFDGFLARKLNQTT) are periplasmic. A helical transmembrane segment spans residues 61–81 (CFGAFLDPVADKIIVVIGLIL). The Cytoplasmic segment spans residues 82 to 86 (IIEYF). A helical membrane pass occupies residues 87–107 (HSFWITIPSLIMIIREIIISS). Over 108–145 (LREWMAEIGKNNLLSVSLISKLKTSIQMLAIFSLLWKE) the chain is Periplasmic. A helical transmembrane segment spans residues 146 to 168 (TYIIIIIGILSLYVSSILAFLSM). Residues 169 to 181 (LKYFYIAWRDLFR) lie on the Cytoplasmic side of the membrane.

It belongs to the CDP-alcohol phosphatidyltransferase class-I family.

The protein localises to the cell inner membrane. The catalysed reaction is a CDP-1,2-diacyl-sn-glycerol + sn-glycerol 3-phosphate = a 1,2-diacyl-sn-glycero-3-phospho-(1'-sn-glycero-3'-phosphate) + CMP + H(+). It participates in phospholipid metabolism; phosphatidylglycerol biosynthesis; phosphatidylglycerol from CDP-diacylglycerol: step 1/2. In terms of biological role, catalyzes the conversion of cytidine diphosphate diacylglycerol (CDP-DG) and glycerol 3-phosphate into phosphatidylglycerol. Essential for the synthesis of anionic phospholipids, thereby playing a role in balancing the ratio of zwitterionic and anionic phospholipids, which is thought to be important for normal membrane function. The protein is CDP-diacylglycerol--glycerol-3-phosphate 3-phosphatidyltransferase of Wigglesworthia glossinidia brevipalpis.